The sequence spans 148 residues: 3-dehydroquinate dehydratase 2 (148 aa).

Y24 acts as the Proton acceptor in catalysis. Substrate is bound by residues N75, H81, and D88. H101 serves as the catalytic Proton donor. Residues 102–103 (LS) and R112 contribute to the substrate site.

The protein belongs to the type-II 3-dehydroquinase family. Homododecamer.

It catalyses the reaction 3-dehydroquinate = 3-dehydroshikimate + H2O. Its pathway is metabolic intermediate biosynthesis; chorismate biosynthesis; chorismate from D-erythrose 4-phosphate and phosphoenolpyruvate: step 3/7. Functionally, catalyzes a trans-dehydration via an enolate intermediate. The protein is 3-dehydroquinate dehydratase 2 (aroQ2) of Pseudomonas aeruginosa (strain ATCC 15692 / DSM 22644 / CIP 104116 / JCM 14847 / LMG 12228 / 1C / PRS 101 / PAO1).